The sequence spans 98 residues: NADH-ubiquinone oxidoreductase chain 4L (98 aa).

3 helical membrane passes run 1–21, 29–49, and 61–81; these read MSLT…GLLM, ALLC…ITIL, and IILL…LVMV.

Belongs to the complex I subunit 4L family. Core subunit of respiratory chain NADH dehydrogenase (Complex I) which is composed of 45 different subunits.

The protein resides in the mitochondrion inner membrane. The catalysed reaction is a ubiquinone + NADH + 5 H(+)(in) = a ubiquinol + NAD(+) + 4 H(+)(out). In terms of biological role, core subunit of the mitochondrial membrane respiratory chain NADH dehydrogenase (Complex I) which catalyzes electron transfer from NADH through the respiratory chain, using ubiquinone as an electron acceptor. Part of the enzyme membrane arm which is embedded in the lipid bilayer and involved in proton translocation. The chain is NADH-ubiquinone oxidoreductase chain 4L (MT-ND4L) from Rhinophylla pumilio (Dwarf little fruit bat).